The sequence spans 234 residues: ATP synthase subunit delta, chloroplastic (234 aa).

The N-terminal 47 residues, 1–47 (MASLQQTLFSLQSKLPPSSFQIARSLPLRKTFPIRINNGGNAAGARM), are a transit peptide targeting the chloroplast. At S48 the chain carries N-acetylserine. N-linked (GlcNAc...) asparagine glycosylation occurs at N66. Residue T234 is modified to Phosphothreonine.

Belongs to the ATPase delta chain family. As to quaternary structure, F-type ATPases have 2 components, F(1) - the catalytic core - and F(0) - the membrane proton channel. F(1) has five subunits: alpha(3), beta(3), gamma(1), delta(1), epsilon(1). CF(0) has four main subunits: a(1), b(1), b'(1) and c(10-14). The alpha and beta chains form an alternating ring which encloses part of the gamma chain. F(1) is attached to F(0) by a central stalk formed by the gamma and epsilon chains, while a peripheral stalk is formed by the delta, b and b' chains.

The protein localises to the plastid. Its subcellular location is the chloroplast thylakoid membrane. In terms of biological role, f(1)F(0) ATP synthase produces ATP from ADP in the presence of a proton or sodium gradient. F-type ATPases consist of two structural domains, F(1) containing the extramembraneous catalytic core and F(0) containing the membrane proton channel, linked together by a central stalk and a peripheral stalk. During catalysis, ATP synthesis in the catalytic domain of F(1) is coupled via a rotary mechanism of the central stalk subunits to proton translocation (Potential). Essential for photosynthesis, probably by facilitating electron transport in both photosystems I and II. This protein is part of the stalk that links CF(0) to CF(1). It either transmits conformational changes from CF(0) to CF(1) or is implicated in proton conduction. In Arabidopsis thaliana (Mouse-ear cress), this protein is ATP synthase subunit delta, chloroplastic.